Consider the following 1188-residue polypeptide: F-box only protein 38 (1188 aa).

One can recognise an F-box domain in the interval 30 to 75 (MNQLSHEVLCHIFRYLPLQDIMCMECLSRKLKEAVTLYLRVVRVVD). Positions 59–119 (KLKEAVTLYL…LHPRYLERRR (61 aa)) are interaction with KLF7. 3 short sequence motifs (nuclear export signal) span residues 194–201 (LHLVGVNV), 307–316 (LEVDLGYLII), and 451–460 (LLPSLEFISL). Positions 487–526 (ALVSNQNSNNDDNNAQNNNANIHDNNHHHPDDSDEENDFR) are disordered. Residues 491–509 (NQNSNNDDNNAQNNNANIH) are compositionally biased toward low complexity. T591 is modified (phosphothreonine). S598, S600, and S606 each carry phosphoserine. 3 disordered regions span residues 620-666 (RRYS…FPLE), 685-766 (MKAA…MEEG), and 787-909 (RTSR…STSD). Composition is skewed to basic and acidic residues over residues 621-630 (RYSEREEKTG) and 685-699 (MKAA…KNKD). A compositionally biased stretch (polar residues) spans 703–740 (SCSSTTASTVGNSSSHNTASQSPDFVRTVNSGGSSEPS). S736 and S740 each carry phosphoserine. A compositionally biased stretch (basic and acidic residues) spans 787–798 (RTSRCSDEERPS). Residues 849–861 (SSQPESCDVQSNE) are compositionally biased toward polar residues. Positions 889 to 900 (TKPRHAMKRKRT) are enriched in basic residues. The Nuclear localization signal signature appears at 896-899 (KRKR).

As to quaternary structure, part of the SCF (SKP1-CUL1-F-box) E3 ubiquitin-protein ligase complex SCF(FBXO38) composed of CUL1, SKP1, RBX1 and FBXO38. Interacts with KLF7. Interacts with PDCD1/PD-1.

It is found in the cytoplasm. The protein localises to the cytosol. Its subcellular location is the nucleus. Its pathway is protein modification; protein ubiquitination. Its function is as follows. Substrate recognition component of a SCF (SKP1-CUL1-F-box protein) E3 ubiquitin-protein ligase complex which mediates the ubiquitination and subsequent proteasomal degradation of PDCD1/PD-1, thereby regulating T-cells-mediated immunity. Required for anti-tumor activity of T-cells by promoting the degradation of PDCD1/PD-1; the PDCD1-mediated inhibitory pathway being exploited by tumors to attenuate anti-tumor immunity and facilitate tumor survival. May indirectly stimulate the activity of transcription factor KLF7, a regulator of neuronal differentiation, without promoting KLF7 ubiquitination. This Homo sapiens (Human) protein is F-box only protein 38.